The chain runs to 99 residues: Integration host factor subunit alpha (99 aa).

The tract at residues 49–71 (FGNFDLRDKNQRPGRNPKTGEDI) is disordered.

The protein belongs to the bacterial histone-like protein family. Heterodimer of an alpha and a beta chain.

Functionally, this protein is one of the two subunits of integration host factor, a specific DNA-binding protein that functions in genetic recombination as well as in transcriptional and translational control. The chain is Integration host factor subunit alpha from Shewanella denitrificans (strain OS217 / ATCC BAA-1090 / DSM 15013).